A 222-amino-acid chain; its full sequence is 2-hydroxypent-2,4-dienoate hydratase (222 aa).

The protein belongs to the hydratase/decarboxylase family.

It participates in aromatic compound metabolism; benzoate degradation via hydroxylation. Functionally, conversion of 2-hydroxypent-2,4-dienoate into 4-hydroxy-2-oxopentanoate. The polypeptide is 2-hydroxypent-2,4-dienoate hydratase (xylJ) (Pseudomonas putida (Arthrobacter siderocapsulatus)).